Here is a 224-residue protein sequence, read N- to C-terminus: Lipoprotein-releasing system ATP-binding protein LolD (224 aa).

An ABC transporter domain is found at 5–224 (LRAENIKKVI…GKVVGEITRV (220 aa)). 37 to 44 (GASGSGKS) is an ATP binding site.

Belongs to the ABC transporter superfamily. Lipoprotein translocase (TC 3.A.1.125) family. In terms of assembly, the complex is composed of two ATP-binding proteins (LolD) and two transmembrane proteins (LolC and LolE).

It is found in the cell inner membrane. Its function is as follows. Part of the ABC transporter complex LolCDE involved in the translocation of mature outer membrane-directed lipoproteins, from the inner membrane to the periplasmic chaperone, LolA. Responsible for the formation of the LolA-lipoprotein complex in an ATP-dependent manner. The polypeptide is Lipoprotein-releasing system ATP-binding protein LolD (Aquifex aeolicus (strain VF5)).